The following is a 382-amino-acid chain: MANQGQRVSWGDESTKIRGRSNSRGRKINNIPLSFFNPITLQQGAKFWNSCPRDFVPKGIGNRDQQIGYWNRQTRYRMVKGQRKELPERWFFYYLGTGPHADAKFKDKLDGVVWVAKDGAMNKPTTLGSRGANNESKALKFDGKVPGEFQLEVNQSRDNSRSRSQSRSRSRNRSQSRGRQQSNNKKDDSVEQAVLAALKKLGVYTEKQQQRSRSKSKERSNSKTRDTTPKNENKHTWKRTAGKGDVTRFYGARSSSANFGDSDLVANGSSAKHYPQLAECVPSVSSILFGSYWTSKEDGDQIEVTFTHKYHLPKDHPKTEQFLQQINAYASPSELAKEQRKRKSRSKSAERSEQEVVPDSLIENYTDVFDDTQVEMIDEVTN.

Disordered stretches follow at residues 1-24, 150-190, and 202-240; these read MANQGQRVSWGDESTKIRGRSNSR, QLEV…DDSV, and GVYTEKQQQRSRSKSKERSNSKTRDTTPKNENKHTWKRT. A Phosphoserine; by host modification is found at S9. The CoV N NTD domain maps to 31 to 153; the sequence is IPLSFFNPIT…KVPGEFQLEV (123 aa). Positions 33 to 159 are RNA-binding; it reads LSFFNPITLQ…QLEVNQSRDN (127 aa). Positions 154–163 are enriched in low complexity; sequence NQSRDNSRSR. At S156 the chain carries Phosphoserine; by host. Residues 164–176 show a composition bias toward basic residues; that stretch reads SQSRSRSRNRSQS. Over residues 215–235 the composition is skewed to basic and acidic residues; it reads KSKERSNSKTRDTTPKNENKH. Residues 224–337 enclose the CoV N CTD domain; that stretch reads TRDTTPKNEN…AYASPSELAK (114 aa). The interval 231–334 is dimerization; the sequence is NENKHTWKRT…QINAYASPSE (104 aa). A phosphoserine; by host mark is found at S254 and S256. Positions 328–362 are disordered; it reads AYASPSELAKEQRKRKSRSKSAERSEQEVVPDSLI.

The protein belongs to the alphacoronavirus nucleocapsid protein family. As to quaternary structure, homooligomer. Both monomeric and oligomeric forms interact with RNA. Interacts with protein M. Interacts with NSP3; this interaction serves to tether the genome to the newly translated replicase-transcriptase complex at a very early stage of infection. Post-translationally, ADP-ribosylated. The ADP-ribosylation is retained in the virion during infection. In terms of processing, phosphorylated on serine and threonine residues.

The protein resides in the virion. It localises to the host endoplasmic reticulum-Golgi intermediate compartment. The protein localises to the host Golgi apparatus. Its function is as follows. Packages the positive strand viral genome RNA into a helical ribonucleocapsid (RNP) and plays a fundamental role during virion assembly through its interactions with the viral genome and membrane protein M. Plays an important role in enhancing the efficiency of subgenomic viral RNA transcription as well as viral replication. The sequence is that of Nucleoprotein from Porcine respiratory coronavirus (strain RM4) (PRCoV).